Reading from the N-terminus, the 439-residue chain is Xaa-Pro dipeptidase (439 aa).

Mn(2+) contacts are provided by Asp244, Asp255, His335, Glu380, and Glu419.

This sequence belongs to the peptidase M24B family. Bacterial-type prolidase subfamily. Mn(2+) serves as cofactor.

It catalyses the reaction Xaa-L-Pro dipeptide + H2O = an L-alpha-amino acid + L-proline. Its function is as follows. Splits dipeptides with a prolyl residue in the C-terminal position. This chain is Xaa-Pro dipeptidase, found in Shewanella amazonensis (strain ATCC BAA-1098 / SB2B).